The sequence spans 398 residues: Na(+)/H(+) antiporter NhaA (398 aa).

12 helical membrane-spanning segments follow: residues 21-41 (AGGIILMVAAALALIVANSPL), 56-76 (LSVSHWVNDGLMAVFFLLVGL), 94-114 (VLPGIAAAGGMLVPALVYVFI), 124-144 (GWAIPTATDIAFALGVLSLLG), 153-173 (VFLTALAIIDDLGAVIIIAIF), 176-196 (SGLSLAYLGAAFAVIAALVVL), 201-221 (VMTLLPYLVLGAILWVLVLKS), 263-283 (IVPFFVIPIFGFANAGVSLAG), 284-304 (LSLGALIEPLTLGVAAGLVVG), 306-326 (LVGVFGSSALAIRLGLADLPA), 333-353 (MIGISLLCGIGFTMSLFIGLL), and 367-387 (VGILAGSFVAAILGAAVLLMA).

Belongs to the NhaA Na(+)/H(+) (TC 2.A.33) antiporter family.

Its subcellular location is the cell inner membrane. The enzyme catalyses Na(+)(in) + 2 H(+)(out) = Na(+)(out) + 2 H(+)(in). Functionally, na(+)/H(+) antiporter that extrudes sodium in exchange for external protons. In Mesorhizobium japonicum (strain LMG 29417 / CECT 9101 / MAFF 303099) (Mesorhizobium loti (strain MAFF 303099)), this protein is Na(+)/H(+) antiporter NhaA.